The following is a 72-amino-acid chain: MTNQYPPQQDRPQWYAGSPYPVAPPPMPQPTVMPVRTNHAMHLLLSLITCGMWLPVWVIMAMINSGRTRKVY.

The chain is Gene 35 protein (35) from Mycobacterium phage L5 (Mycobacteriophage L5).